Consider the following 512-residue polypeptide: Glutathione-binding protein GsiB (512 aa).

Residues 1–26 (MARAVHRSGLVALGIATALMASCAFA) form the signal peptide.

It belongs to the bacterial solute-binding protein 5 family. As to quaternary structure, the complex is composed of two ATP-binding proteins (GsiA), two transmembrane proteins (GsiC and GsiD) and a solute-binding protein (GsiB). In the presence of glutathione, interacts with the transmembrane proteins GsiC and GsiD.

It localises to the periplasm. Its function is as follows. Part of the ABC transporter complex GsiABCD involved in glutathione import. Binds glutathione. This chain is Glutathione-binding protein GsiB, found in Escherichia coli (strain K12).